The primary structure comprises 61 residues: Phospholipase A2 (61 aa).

Positions 27, 29, and 31 each coordinate Ca(2+). The cysteines at positions 28 and 35 are disulfide-linked. H38 is a catalytic residue. D39 contributes to the Ca(2+) binding site. C41 and C59 are oxidised to a cystine. The active site involves D60.

It belongs to the phospholipase A2 family. Group II subfamily. D49 sub-subfamily. As to quaternary structure, homodimer. Ca(2+) serves as cofactor. In terms of tissue distribution, expressed by the venom gland.

Its subcellular location is the secreted. The enzyme catalyses a 1,2-diacyl-sn-glycero-3-phosphocholine + H2O = a 1-acyl-sn-glycero-3-phosphocholine + a fatty acid + H(+). In terms of biological role, snake venom phospholipase A2 (PLA2) that displays edema-inducing activities. PLA2 catalyzes the calcium-dependent hydrolysis of the 2-acyl groups in 3-sn-phosphoglycerides. This chain is Phospholipase A2, found in Crotalus atrox (Western diamondback rattlesnake).